The primary structure comprises 32 residues: METLVYTFLLIGTLAVLFAAVFFRDPPRIAKK.

Residues 3–23 traverse the membrane as a helical segment; sequence TLVYTFLLIGTLAVLFAAVFF.

It belongs to the PsbT family. As to quaternary structure, PSII is composed of 1 copy each of membrane proteins PsbA, PsbB, PsbC, PsbD, PsbE, PsbF, PsbH, PsbI, PsbJ, PsbK, PsbL, PsbM, PsbT, PsbX, PsbY, PsbZ, Psb30/Ycf12, at least 3 peripheral proteins of the oxygen-evolving complex and a large number of cofactors. It forms dimeric complexes.

The protein resides in the plastid. Its subcellular location is the chloroplast thylakoid membrane. In terms of biological role, found at the monomer-monomer interface of the photosystem II (PS II) dimer, plays a role in assembly and dimerization of PSII. PSII is a light-driven water plastoquinone oxidoreductase, using light energy to abstract electrons from H(2)O, generating a proton gradient subsequently used for ATP formation. This Guillardia theta (Cryptophyte) protein is Photosystem II reaction center protein T.